The chain runs to 182 residues: Large ribosomal subunit protein uL5 (182 aa).

The protein belongs to the universal ribosomal protein uL5 family. Part of the 50S ribosomal subunit; part of the 5S rRNA/L5/L18/L25 subcomplex. Contacts the 5S rRNA and the P site tRNA. Forms a bridge to the 30S subunit in the 70S ribosome.

Functionally, this is one of the proteins that bind and probably mediate the attachment of the 5S RNA into the large ribosomal subunit, where it forms part of the central protuberance. In the 70S ribosome it contacts protein S13 of the 30S subunit (bridge B1b), connecting the 2 subunits; this bridge is implicated in subunit movement. Contacts the P site tRNA; the 5S rRNA and some of its associated proteins might help stabilize positioning of ribosome-bound tRNAs. This Thermus thermophilus (strain ATCC BAA-163 / DSM 7039 / HB27) protein is Large ribosomal subunit protein uL5.